The sequence spans 359 residues: F-box protein At5g49610 (359 aa).

The F-box domain maps to 3–52 (NQKGALFPDEVILQILARLPVKSLFRFKSVCKSWYRLPSDKYFTSLFNQL).

As to quaternary structure, part of a SCF (SKP1-cullin-F-box) protein ligase complex. Interacts with SKP1A, SKP1B, ASK11, ASK12, ASK13 and ASK14.

The protein operates within protein modification; protein ubiquitination. This Arabidopsis thaliana (Mouse-ear cress) protein is F-box protein At5g49610.